The primary structure comprises 158 residues: 2-C-methyl-D-erythritol 2,4-cyclodiphosphate synthase (158 aa).

Residues aspartate 8 and histidine 10 each contribute to the a divalent metal cation site. 4-CDP-2-C-methyl-D-erythritol 2-phosphate is bound by residues 8-10 (DVH) and 34-35 (HS). Residue histidine 42 coordinates a divalent metal cation. Residues 56–58 (DIG), 61–65 (FPDDD), 132–135 (TTFE), and phenylalanine 139 contribute to the 4-CDP-2-C-methyl-D-erythritol 2-phosphate site.

It belongs to the IspF family. In terms of assembly, homotrimer. Requires a divalent metal cation as cofactor.

The catalysed reaction is 4-CDP-2-C-methyl-D-erythritol 2-phosphate = 2-C-methyl-D-erythritol 2,4-cyclic diphosphate + CMP. It functions in the pathway isoprenoid biosynthesis; isopentenyl diphosphate biosynthesis via DXP pathway; isopentenyl diphosphate from 1-deoxy-D-xylulose 5-phosphate: step 4/6. In terms of biological role, involved in the biosynthesis of isopentenyl diphosphate (IPP) and dimethylallyl diphosphate (DMAPP), two major building blocks of isoprenoid compounds. Catalyzes the conversion of 4-diphosphocytidyl-2-C-methyl-D-erythritol 2-phosphate (CDP-ME2P) to 2-C-methyl-D-erythritol 2,4-cyclodiphosphate (ME-CPP) with a corresponding release of cytidine 5-monophosphate (CMP). This Natranaerobius thermophilus (strain ATCC BAA-1301 / DSM 18059 / JW/NM-WN-LF) protein is 2-C-methyl-D-erythritol 2,4-cyclodiphosphate synthase.